The sequence spans 931 residues: Isoleucine--tRNA ligase (931 aa).

The 'HIGH' region motif lies at 58–68; sequence PYANGHLHCGH. E559 contributes to the L-isoleucyl-5'-AMP binding site. Positions 600 to 604 match the 'KMSKS' region motif; the sequence is KLSKS. K603 contributes to the ATP binding site. Zn(2+) contacts are provided by C894, C897, C914, and C917.

The protein belongs to the class-I aminoacyl-tRNA synthetase family. IleS type 1 subfamily. Monomer. Zn(2+) serves as cofactor.

The protein localises to the cytoplasm. The enzyme catalyses tRNA(Ile) + L-isoleucine + ATP = L-isoleucyl-tRNA(Ile) + AMP + diphosphate. Functionally, catalyzes the attachment of isoleucine to tRNA(Ile). As IleRS can inadvertently accommodate and process structurally similar amino acids such as valine, to avoid such errors it has two additional distinct tRNA(Ile)-dependent editing activities. One activity is designated as 'pretransfer' editing and involves the hydrolysis of activated Val-AMP. The other activity is designated 'posttransfer' editing and involves deacylation of mischarged Val-tRNA(Ile). The polypeptide is Isoleucine--tRNA ligase (Legionella pneumophila (strain Corby)).